Consider the following 352-residue polypeptide: (2E,6E)-farnesyl diphosphate synthase (352 aa).

3 residues coordinate isopentenyl diphosphate: lysine 43, arginine 46, and histidine 77. Positions 84 and 88 each coordinate Mg(2+). Residues 84 to 88 (DDLID) carry the DDXXD motif motif. Arginine 94 contacts isopentenyl diphosphate. The short motif at 236 to 240 (DDVLG) is the DDXXD motif element.

The protein belongs to the FPP/GGPP synthase family. The cofactor is Mg(2+).

It catalyses the reaction isopentenyl diphosphate + dimethylallyl diphosphate = (2E)-geranyl diphosphate + diphosphate. It carries out the reaction isopentenyl diphosphate + (2E)-geranyl diphosphate = (2E,6E)-farnesyl diphosphate + diphosphate. It functions in the pathway isoprenoid biosynthesis; geranyl diphosphate biosynthesis; geranyl diphosphate from dimethylallyl diphosphate and isopentenyl diphosphate: step 1/1. It participates in isoprenoid biosynthesis; farnesyl diphosphate biosynthesis; farnesyl diphosphate from geranyl diphosphate and isopentenyl diphosphate. Its function is as follows. Catalyzes the sequential condensations of isopentenyl pyrophosphate (IPP) with dimethylallyl diphosphate (DMAPP) to yield geranyl diphosphate (GPP) and with GPP to yield (2E,6E)-farnesyl diphosphate (E,E-FPP). In Mycobacterium tuberculosis (strain ATCC 25618 / H37Rv), this protein is (2E,6E)-farnesyl diphosphate synthase.